We begin with the raw amino-acid sequence, 490 residues long: MARLSSLLSFSLALLIFLHGSTAQQFPNECQLDQLNALEPSHVLKAEAGRIEVWDHHAPQLRCSGVSFVRYIIESKGLYLPSFFSTAKLSFVAKGEGLMGRVVPGCAETFQDSSVFQPSGGSPSGEGQGQGQQGQGQGHQGQGQGQQGQQGQQGQQSQGQGFRDMHQKVEHIRTGDTIATHPGVAQWFYNDGNQPLVIVSVLDLASHQNQLDRNPRPFYLAGNNPQGQVWIEGREQQPQKNILNGFTPEVLAKAFKIDVRTAQQLQNQQDNRGNIIRVQGPFSVIRPPLRSQRPQETEVNGLEETICSARCTDNLDDPSNADVYKPQLGYISTLNSYDLPILRFLRLSALRGSIRQNAMVLPQWNANANAVLYVTDGEAHVQVVNDNGDRVFDGQVSQGQLLSIPQGFSVVKRATSEQFRWIEFKTNANAQINTLAGRTSVLRGLPLEVISNGYQISLEEARRVKFNTIETTLTHSSGPASYGGPRKADA.

The N-terminal stretch at 1–23 is a signal peptide; the sequence is MARLSSLLSFSLALLIFLHGSTA. Disulfide bonds link Cys-30–Cys-63 and Cys-106–Cys-307. 2 consecutive Cupin type-1 domains span residues 35–263 and 313–462; these read LNAL…RTAQ and DNLD…EEAR. Residue Thr-109 is modified to Phosphothreonine. The tract at residues 113–164 is disordered; sequence SSVFQPSGGSPSGEGQGQGQQGQGQGHQGQGQGQQGQQGQQGQQSQGQGFRD. Over residues 122–148 the composition is skewed to gly residues; that stretch reads SPSGEGQGQGQQGQGQGHQGQGQGQQG. Low complexity predominate over residues 149–161; sequence QQGQQGQQSQGQG. Tyr-330 is subject to Phosphotyrosine. At Ser-332 the chain carries Phosphoserine. Thr-426 carries the post-translational modification Phosphothreonine.

The protein belongs to the 11S seed storage protein (globulins) family. As to quaternary structure, hexamer; each subunit is composed of an acidic and a basic chain derived from a single precursor and linked by a disulfide bond.

In terms of biological role, this is a seed storage protein. The polypeptide is Cruciferin BnC1 (BnC1) (Brassica napus (Rape)).